The sequence spans 289 residues: MKKQPIVALESTVIAHGLPWPTNFETAVSMENKVKEKGAIPKTLGIINGEIKIGLTEKEIEHLAKAKNVMKIGTAEIAAAIALRRNAATTVSATMRLAKNAGIDVFATGGIGGVHRNVPWDVSQDIMELSKTRMIVVCAGFKSILDVERTIEFLETFQVTVVGYQTDYMPLFHTKESEYKVNIRADSPEEIVAIFNEKEKLGIEGAILVANPIPEQSEIPREELEEYIKKAVAQAKENGISGKSLTPFLLSRLTELSGGKTLTANIALLKNNASLAGEIAVALSRGGRD.

The Proton donor role is filled by E10. Substrate is bound by residues K71 and V91. D121 serves as a coordination point for Mn(2+). Position 123–125 (123–125 (SQD)) interacts with substrate. K142 acts as the Nucleophile in catalysis.

It belongs to the pseudouridine-5'-phosphate glycosidase family. In terms of assembly, homotrimer. Mn(2+) serves as cofactor.

It catalyses the reaction D-ribose 5-phosphate + uracil = psi-UMP + H2O. Catalyzes the reversible cleavage of pseudouridine 5'-phosphate (PsiMP) to ribose 5-phosphate and uracil. Functions biologically in the cleavage direction, as part of a pseudouridine degradation pathway. This Kosmotoga olearia (strain ATCC BAA-1733 / DSM 21960 / TBF 19.5.1) protein is Pseudouridine-5'-phosphate glycosidase.